We begin with the raw amino-acid sequence, 160 residues long: Transcription elongation factor GreA (160 aa).

Positions 3 to 84 form a coiled coil; sequence NIVDDKILLT…SKAKIIKADL (82 aa).

This sequence belongs to the GreA/GreB family.

Functionally, necessary for efficient RNA polymerase transcription elongation past template-encoded arresting sites. The arresting sites in DNA have the property of trapping a certain fraction of elongating RNA polymerases that pass through, resulting in locked ternary complexes. Cleavage of the nascent transcript by cleavage factors such as GreA or GreB allows the resumption of elongation from the new 3'terminus. GreA releases sequences of 2 to 3 nucleotides. The sequence is that of Transcription elongation factor GreA from Mesomycoplasma hyopneumoniae (strain J / ATCC 25934 / NCTC 10110) (Mycoplasma hyopneumoniae).